The primary structure comprises 429 residues: Phenylalanine--tRNA ligase, chloroplastic/mitochondrial (429 aa).

The N-terminal 53 residues, Met1–Ser53, are a transit peptide targeting the chloroplast and mitochondrion. Ala54 carries the post-translational modification N-acetylalanine. Residues Ser163–Gln166, Arg185, Thr192–Tyr194, Gln199–Glu201, Glu269, and Phe294 contribute to the substrate site. The region spanning Ser338 to Arg429 is the FDX-ACB domain.

Belongs to the class-II aminoacyl-tRNA synthetase family. Monomer.

The protein resides in the plastid. It localises to the chloroplast stroma. It is found in the mitochondrion matrix. It carries out the reaction tRNA(Phe) + L-phenylalanine + ATP = L-phenylalanyl-tRNA(Phe) + AMP + diphosphate + H(+). Its function is as follows. Is responsible for the charging of tRNA(Phe) with phenylalanine in mitochondrial translation. This is Phenylalanine--tRNA ligase, chloroplastic/mitochondrial from Arabidopsis thaliana (Mouse-ear cress).